Reading from the N-terminus, the 664-residue chain is UvrABC system protein B (664 aa).

The region spanning 25 to 412 (KGLVSGLTDQ…LQVVEQLVRP (388 aa)) is the Helicase ATP-binding domain. Residue 38–45 (GVTGSGKT) coordinates ATP. Residues 91–114 (YYDYYQPEAYVPQKDMYIEKDSDI) carry the Beta-hairpin motif. A Helicase C-terminal domain is found at 428–594 (QIDDLLEEVK…GIRKAIKDIN (167 aa)). The 36-residue stretch at 620–655 (ARLIKELESQMKKAAKNLEFERAALIRDRVVELRAA) folds into the UVR domain.

It belongs to the UvrB family. As to quaternary structure, forms a heterotetramer with UvrA during the search for lesions. Interacts with UvrC in an incision complex.

The protein resides in the cytoplasm. In terms of biological role, the UvrABC repair system catalyzes the recognition and processing of DNA lesions. A damage recognition complex composed of 2 UvrA and 2 UvrB subunits scans DNA for abnormalities. Upon binding of the UvrA(2)B(2) complex to a putative damaged site, the DNA wraps around one UvrB monomer. DNA wrap is dependent on ATP binding by UvrB and probably causes local melting of the DNA helix, facilitating insertion of UvrB beta-hairpin between the DNA strands. Then UvrB probes one DNA strand for the presence of a lesion. If a lesion is found the UvrA subunits dissociate and the UvrB-DNA preincision complex is formed. This complex is subsequently bound by UvrC and the second UvrB is released. If no lesion is found, the DNA wraps around the other UvrB subunit that will check the other stand for damage. The protein is UvrABC system protein B of Dehalococcoides mccartyi (strain CBDB1).